The chain runs to 288 residues: Probable branched-chain-amino-acid aminotransferase (288 aa).

K153 carries the post-translational modification N6-(pyridoxal phosphate)lysine.

This sequence belongs to the class-IV pyridoxal-phosphate-dependent aminotransferase family. Pyridoxal 5'-phosphate is required as a cofactor.

The catalysed reaction is L-leucine + 2-oxoglutarate = 4-methyl-2-oxopentanoate + L-glutamate. The enzyme catalyses L-isoleucine + 2-oxoglutarate = (S)-3-methyl-2-oxopentanoate + L-glutamate. It carries out the reaction L-valine + 2-oxoglutarate = 3-methyl-2-oxobutanoate + L-glutamate. Its pathway is amino-acid biosynthesis; L-isoleucine biosynthesis; L-isoleucine from 2-oxobutanoate: step 4/4. It functions in the pathway amino-acid biosynthesis; L-leucine biosynthesis; L-leucine from 3-methyl-2-oxobutanoate: step 4/4. The protein operates within amino-acid biosynthesis; L-valine biosynthesis; L-valine from pyruvate: step 4/4. Functionally, acts on leucine, isoleucine and valine. In Rickettsia typhi (strain ATCC VR-144 / Wilmington), this protein is Probable branched-chain-amino-acid aminotransferase (ilvE).